Here is a 532-residue protein sequence, read N- to C-terminus: Phosphoenolpyruvate carboxykinase (ATP) (532 aa).

Residues arginine 60, tyrosine 200, and lysine 206 each contribute to the substrate site. Residues lysine 206, histidine 225, and 242–250 (GLSGTGKTT) each bind ATP. Lysine 206 and histidine 225 together coordinate Mn(2+). Serine 244 is a binding site for substrate. Aspartate 263 contacts Mn(2+). ATP contacts are provided by residues glutamate 291, arginine 327, 443 to 444 (RI), and threonine 449. Arginine 327 provides a ligand contact to substrate.

This sequence belongs to the phosphoenolpyruvate carboxykinase (ATP) family. As to quaternary structure, monomer. It depends on Mn(2+) as a cofactor.

Its subcellular location is the cytoplasm. It catalyses the reaction oxaloacetate + ATP = phosphoenolpyruvate + ADP + CO2. Its pathway is carbohydrate biosynthesis; gluconeogenesis. With respect to regulation, inhibited by p-chloromercuribenzoate. In terms of biological role, involved in gluconeogenesis. Catalyzes the conversion of oxaloacetate (OAA) to phosphoenolpyruvate (PEP) through direct phosphoryl transfer between the nucleoside triphosphate and OAA. In Anaerobiospirillum succiniciproducens, this protein is Phosphoenolpyruvate carboxykinase (ATP).